We begin with the raw amino-acid sequence, 231 residues long: Ribose-5-phosphate isomerase A (231 aa).

Residues 40-43 (TGST), 93-96 (DGAD), and 106-109 (KGGG) contribute to the substrate site. The active-site Proton acceptor is glutamate 115. Position 133 (lysine 133) interacts with substrate.

The protein belongs to the ribose 5-phosphate isomerase family. In terms of assembly, homodimer.

The enzyme catalyses aldehydo-D-ribose 5-phosphate = D-ribulose 5-phosphate. The protein operates within carbohydrate degradation; pentose phosphate pathway; D-ribose 5-phosphate from D-ribulose 5-phosphate (non-oxidative stage): step 1/1. In terms of biological role, catalyzes the reversible conversion of ribose-5-phosphate to ribulose 5-phosphate. The protein is Ribose-5-phosphate isomerase A of Escherichia coli O6:K15:H31 (strain 536 / UPEC).